The primary structure comprises 414 residues: MHYCVLSAFLLLHLVTAALSLSTCSTLDMDQFMRKRIEAIRGQILSKLKLTSPPEDYPEPEEVPPEVISIYNSTRDLLQEKASRRAAACERERSDEEYYAKEVYKIDMPPFFPSENAIPPTFYRPYFRIVRFDVSAMEKNASNLVKAEFRVFRLQNPKARVPEQRIELYQILKSKDLTSPTQRYIDSKVVKTRAEGEWLSFDVTDAVHEWLHHKDRNLGFKISLHCPCCTFVPSNNYIIPNKSEELEARFAGIDGTSTYTSGDQKTIKSTRKKNSGKTPHLLLMLLPSYRLESQQSNRRKKRALDAAYCFRNVQDNCCLRPLYIDFKRDLGWKWIHEPKGYNANFCAGACPYLWSSDTQHSRVLSLYNTINPEASASPCCVSQDLEPLTILYYIGKTPKIEQLSNMIVKSCKCS.

The N-terminal stretch at 1–20 (MHYCVLSAFLLLHLVTAALS) is a signal peptide. Residues asparagine 72, asparagine 140, and asparagine 241 are each glycosylated (N-linked (GlcNAc...) asparagine). Intrachain disulfides connect cysteine 309/cysteine 318, cysteine 317/cysteine 380, cysteine 346/cysteine 411, and cysteine 350/cysteine 413.

The protein belongs to the TGF-beta family. Interacts with the serine proteases, HTRA1 and HTRA3. Interacts with ASPN. Interacts with MFAP5. As to quaternary structure, interacts with Transforming growth factor beta-2 (TGF-beta-2) chain; interaction is non-covalent and maintains (TGF-beta-2) in a latent state. Interacts with LRRC32/GARP; leading to regulate activation of TGF-beta-2. Interacts with NREP; the interaction results in a decrease in TGFB2 autoinduction. In terms of assembly, transforming growth factor beta-2: Homodimer; disulfide-linked. Transforming growth factor beta-2: Interacts with TGF-beta receptors (TGFBR1 and TGFBR2), leading to signal transduction. Post-translationally, the precursor proprotein is cleaved in the Golgi apparatus to form Transforming growth factor beta-2 (TGF-beta-2) and Latency-associated peptide (LAP) chains, which remain non-covalently linked, rendering TGF-beta-2 inactive.

The protein localises to the secreted. It is found in the extracellular space. It localises to the extracellular matrix. Precursor of the Latency-associated peptide (LAP) and Transforming growth factor beta-2 (TGF-beta-2) chains, which constitute the regulatory and active subunit of TGF-beta-2, respectively. Its function is as follows. Required to maintain the Transforming growth factor beta-2 (TGF-beta-2) chain in a latent state during storage in extracellular matrix. Associates non-covalently with TGF-beta-2 and regulates its activation via interaction with 'milieu molecules', such as LTBP1 and LRRC32/GARP, that control activation of TGF-beta-2. In terms of biological role, multifunctional protein that regulates various processes such as angiogenesis and heart development. Activation into mature form follows different steps: following cleavage of the proprotein in the Golgi apparatus, Latency-associated peptide (LAP) and Transforming growth factor beta-2 (TGF-beta-2) chains remain non-covalently linked rendering TGF-beta-2 inactive during storage in extracellular matrix. At the same time, LAP chain interacts with 'milieu molecules', such as LTBP1 and LRRC32/GARP, that control activation of TGF-beta-2 and maintain it in a latent state during storage in extracellular milieus. Once activated following release of LAP, TGF-beta-2 acts by binding to TGF-beta receptors (TGFBR1 and TGFBR2), which transduce signal. The sequence is that of Transforming growth factor beta-2 proprotein (TGFB2) from Mustela putorius furo (European domestic ferret).